The sequence spans 88 residues: Beta-insect excitatory toxin LqhIT1a (88 aa).

Residues 1–18 (MKFFLLFLVVLPIMGVLG) form the signal peptide. The LCN-type CS-alpha/beta domain maps to 20-83 (KNGYAVDSKG…ISGTTKKYCD (64 aa)). 4 disulfide bridges follow: Cys34–Cys55, Cys40–Cys60, Cys44–Cys62, and Cys56–Cys82.

This sequence belongs to the long (4 C-C) scorpion toxin superfamily. Sodium channel inhibitor family. Beta subfamily. As to expression, expressed by the venom gland.

Its subcellular location is the secreted. In terms of biological role, excitatory insect toxins induce a spastic paralysis. They bind voltage-independently at site-4 of sodium channels (Nav) and shift the voltage of activation toward more negative potentials thereby affecting sodium channel activation and promoting spontaneous and repetitive firing. This is Beta-insect excitatory toxin LqhIT1a from Leiurus hebraeus (Hebrew deathstalker scorpion).